A 505-amino-acid polypeptide reads, in one-letter code: MSIKAEEISALIKQQLENYQAELNVEETGTVTYVGDGIARAHGLNNALSGELLEFSNGVFGMVQNLESNDVGIVIMGNYDGIHEGDVVKRTGRIMEVPVGDALIGRVVNPLGEPLDGKGAIQTTKTRPVENKAPGVMQRKSVEQPLQTGIKAIDALVPIGRGQRELIIGDRKTGKTTIAIDTILNQKDQDMICIYVAIGQKESTVRTQVETLRRYGAMDYTIVVSAGPSEPAPMLYLAPYAGAAMGEEFMYNGKHVLIVYDDLSKQADAYRELSLILRRPPGREAYPGDIFYTHSRLLERAAKLSDDLGGGSMTALPFVETKAGDVSAYIPTNVISITDGQVFLDGDYFNSGTRPAIDAGTSVSRVGGDAQIKAMKKVAGTLRLDLASYRELESFAQFGSDLDKATQAKLARGRRTVEVLKQPLHQPLSVENQVMILYALTHGFLDNVPVDDIQRFQDELFDYIASNNKELTDEIRETKQLPDTDKMDAAIKSFAEHFQPTKEAK.

An ATP-binding site is contributed by 169–176 (GDRKTGKT).

The protein belongs to the ATPase alpha/beta chains family. As to quaternary structure, F-type ATPases have 2 components, CF(1) - the catalytic core - and CF(0) - the membrane proton channel. CF(1) has five subunits: alpha(3), beta(3), gamma(1), delta(1), epsilon(1). CF(0) has three main subunits: a(1), b(2) and c(9-12). The alpha and beta chains form an alternating ring which encloses part of the gamma chain. CF(1) is attached to CF(0) by a central stalk formed by the gamma and epsilon chains, while a peripheral stalk is formed by the delta and b chains.

The protein localises to the cell membrane. It carries out the reaction ATP + H2O + 4 H(+)(in) = ADP + phosphate + 5 H(+)(out). Its function is as follows. Produces ATP from ADP in the presence of a proton gradient across the membrane. The alpha chain is a regulatory subunit. This chain is ATP synthase subunit alpha, found in Pediococcus pentosaceus (strain ATCC 25745 / CCUG 21536 / LMG 10740 / 183-1w).